The sequence spans 108 residues: Large ribosomal subunit protein uL24 (108 aa).

Belongs to the universal ribosomal protein uL24 family. In terms of assembly, part of the 50S ribosomal subunit.

Its function is as follows. One of two assembly initiator proteins, it binds directly to the 5'-end of the 23S rRNA, where it nucleates assembly of the 50S subunit. One of the proteins that surrounds the polypeptide exit tunnel on the outside of the subunit. The chain is Large ribosomal subunit protein uL24 from Mycoplasma genitalium (strain ATCC 33530 / DSM 19775 / NCTC 10195 / G37) (Mycoplasmoides genitalium).